Reading from the N-terminus, the 210-residue chain is 7-carboxy-7-deazaguanine synthase (210 aa).

Residues 12–14 (LQG) and R27 each bind substrate. In terms of domain architecture, Radical SAM core spans 18–210 (QAGRAAVFCR…LQTHKYIGIP (193 aa)). [4Fe-4S] cluster is bound by residues C31, C46, and C49. T51 is a Mg(2+) binding site. T90 lines the substrate pocket. Residues G92, 133 to 135 (SPK), and 173 to 176 (QPMD) each bind S-adenosyl-L-methionine. P210 is a substrate binding site.

Belongs to the radical SAM superfamily. 7-carboxy-7-deazaguanine synthase family. In terms of assembly, homodimer. The cofactor is [4Fe-4S] cluster. Requires S-adenosyl-L-methionine as cofactor. Mg(2+) serves as cofactor.

The enzyme catalyses 6-carboxy-5,6,7,8-tetrahydropterin + H(+) = 7-carboxy-7-deazaguanine + NH4(+). It participates in purine metabolism; 7-cyano-7-deazaguanine biosynthesis. Catalyzes the complex heterocyclic radical-mediated conversion of 6-carboxy-5,6,7,8-tetrahydropterin (CPH4) to 7-carboxy-7-deazaguanine (CDG), a step common to the biosynthetic pathways of all 7-deazapurine-containing compounds. This Bordetella pertussis (strain Tohama I / ATCC BAA-589 / NCTC 13251) protein is 7-carboxy-7-deazaguanine synthase.